The chain runs to 467 residues: Trigger factor (467 aa).

In terms of domain architecture, PPIase FKBP-type spans 174–261; sequence SDIAILTFKG…LQDLKTRELP (88 aa). Residues 439 to 467 are disordered; sequence PKKALNEKVKSSKPKNTQKKTDKTKKDSP. The span at 457–467 shows a compositional bias: basic and acidic residues; that stretch reads KKTDKTKKDSP.

This sequence belongs to the FKBP-type PPIase family. Tig subfamily.

It localises to the cytoplasm. The catalysed reaction is [protein]-peptidylproline (omega=180) = [protein]-peptidylproline (omega=0). Its function is as follows. Involved in protein export. Acts as a chaperone by maintaining the newly synthesized protein in an open conformation. Functions as a peptidyl-prolyl cis-trans isomerase. This chain is Trigger factor, found in Prochlorococcus marinus (strain SARG / CCMP1375 / SS120).